The following is a 249-amino-acid chain: 3-deoxy-manno-octulosonate cytidylyltransferase (249 aa).

The protein belongs to the KdsB family.

It is found in the cytoplasm. It catalyses the reaction 3-deoxy-alpha-D-manno-oct-2-ulosonate + CTP = CMP-3-deoxy-beta-D-manno-octulosonate + diphosphate. It participates in nucleotide-sugar biosynthesis; CMP-3-deoxy-D-manno-octulosonate biosynthesis; CMP-3-deoxy-D-manno-octulosonate from 3-deoxy-D-manno-octulosonate and CTP: step 1/1. The protein operates within bacterial outer membrane biogenesis; lipopolysaccharide biosynthesis. Its function is as follows. Activates KDO (a required 8-carbon sugar) for incorporation into bacterial lipopolysaccharide in Gram-negative bacteria. This is 3-deoxy-manno-octulosonate cytidylyltransferase from Serratia proteamaculans (strain 568).